The following is a 131-amino-acid chain: Small ribosomal subunit protein uS8 (131 aa).

Belongs to the universal ribosomal protein uS8 family. Part of the 30S ribosomal subunit. Contacts proteins S5 and S12.

Its function is as follows. One of the primary rRNA binding proteins, it binds directly to 16S rRNA central domain where it helps coordinate assembly of the platform of the 30S subunit. The protein is Small ribosomal subunit protein uS8 of Leptothrix cholodnii (strain ATCC 51168 / LMG 8142 / SP-6) (Leptothrix discophora (strain SP-6)).